A 379-amino-acid chain; its full sequence is F-box protein At1g30200 (379 aa).

The 49-residue stretch at 24-72 (DHFDLLPDSLLLLIFDKVADVKDLGRCCIVSRRFHSLVPFVENVLVRVD) folds into the F-box domain.

The polypeptide is F-box protein At1g30200 (Arabidopsis thaliana (Mouse-ear cress)).